Here is a 478-residue protein sequence, read N- to C-terminus: MPRRGYSKPGSWGSFWAMLTLVGLVTHAAQRADVGGEAAGTSINHSQAVLQRLQELLRQGNASDVVLRVQAAGTDEVRVFHAHRLLLGLHSELFLELLSNQSEAVLQEPQDCAAVFDKFIRYLYCGELTVLLTQAIPLHRLATKYGVSSLQRGVADYMRAHLAGGAGPAVGWYHYAVGTGDEALRESCLQFLAWNLSAVAASTEWGAVSPELLWQLLQRSDLVLQDELELFHALEAWLGRARPPPAVAERALRAIRYPMIPPAQLFQLQARSAALARHGPAVADLLLQAYQFHAASPLHYAKFFDVNGSAFLPRNYLAPAWGAPWVINNPARDDRSTSFQTQLGPSGHDAGRRVTWNVLFSPRWLPVSLRPVYADAAGTALPAARPEDGRPRLVVTPASSGGDAAGVSFQKTVLVGARQQGRLLVRHAYSFHQSSEEAGDFLAHADLQRRNSEYLVENALHLHLIVKPVYHTLIRTPK.

A signal peptide spans 1–28 (MPRRGYSKPGSWGSFWAMLTLVGLVTHA). Asn-61, Asn-100, and Asn-195 each carry an N-linked (GlcNAc...) asparagine glycan. In terms of domain architecture, BTB spans 63 to 132 (SDVVLRVQAA…LYCGELTVLL (70 aa)). Residues 169-269 (AVGWYHYAVG…IPPAQLFQLQ (101 aa)) enclose the BACK domain.

The protein resides in the secreted. This Homo sapiens (Human) protein is BTB/POZ domain-containing protein 17 (BTBD17).